The following is a 370-amino-acid chain: Protein STRICTOSIDINE SYNTHASE-LIKE 9 (370 aa).

Positions 1 to 26 (MPINQKIPTWFAVPAVFAVLSVISYQ) are cleaved as a signal peptide. N-linked (GlcNAc...) asparagine glycans are attached at residues Asn97 and Asn171.

Belongs to the strictosidine synthase family.

The protein localises to the vacuole. In Arabidopsis thaliana (Mouse-ear cress), this protein is Protein STRICTOSIDINE SYNTHASE-LIKE 9.